We begin with the raw amino-acid sequence, 155 residues long: MHHFSNIKDVVAIDFIKAYAEHLKKSGKLEIPEWVDTVKTGMCKELAPLNPDWIYIRAAAIARKVYLNNGIGVMALRRAYGDQYNKHYNPSHRTLGSGKVNRYILQQLEKMGIVAKIQSGRSLTKEGRKDMDKIAFQVYKEHEAKVTPMILMPMN.

It belongs to the eukaryotic ribosomal protein eS19 family. Component of the small ribosomal subunit.

Its subcellular location is the cytoplasm. In terms of biological role, component of the small ribosomal subunit. The ribosome is a large ribonucleoprotein complex responsible for the synthesis of proteins in the cell. Required for proper maturation of the small (40S) ribosomal subunit. The polypeptide is Small ribosomal subunit protein eS19 (RPS19) (Entamoeba histolytica (strain ATCC 30459 / HM-1:IMSS / ABRM)).